We begin with the raw amino-acid sequence, 419 residues long: N-acylglucosamine 2-epimerase (419 aa).

Residues 185-206 (LLSLVEQLGEEDEELTNMYAEL) are leucine-zipper. The residue at position 418 (Ser-418) is a Phosphoserine.

It belongs to the N-acylglucosamine 2-epimerase family. As to quaternary structure, homodimer. Forms a heterodimer with renin and inhibits its activity.

It carries out the reaction an N-acyl-D-glucosamine = an N-acyl-D-mannosamine. It functions in the pathway amino-sugar metabolism; N-acetylneuraminate degradation. Its function is as follows. Catalyzes the interconversion of N-acetylglucosamine to N-acetylmannosamine. Involved in the N-glycolylneuraminic acid (Neu5Gc) degradation pathway. The chain is N-acylglucosamine 2-epimerase (Renbp) from Mus musculus (Mouse).